The sequence spans 652 residues: Trypanothione synthetase (652 aa).

A Peptidase C51 domain is found at 34 to 174 (SNKHDHFFSG…QHKDGVWTII (141 aa)). 328–330 (RFD) is an ATP binding site. Mg(2+) contacts are provided by D330, E344, and N346. ATP is bound by residues K513, K548, G555, Q583, and 618–620 (IIT).

This sequence in the C-terminal section; belongs to the glutathionylspermidine synthase preATP-grasp family. Mg(2+) is required as a cofactor. Post-translationally, the N-terminus is blocked.

The catalysed reaction is spermidine + glutathione + ATP = glutathionylspermidine + ADP + phosphate + H(+). The enzyme catalyses glutathionylspermidine + glutathione + ATP = trypanothione + ADP + phosphate + H(+). In terms of biological role, conjugates glutathione (gamma-Glu-Cys-Gly) and glutathionylspermidine to form trypanothione (N(1),N(8)-bis(glutathionyl)spermidine), which is involved in maintaining intracellular thiol redox and in defense against oxidants. The chain is Trypanothione synthetase (TRS) from Crithidia fasciculata.